Here is a 65-residue protein sequence, read N- to C-terminus: Large ribosomal subunit protein bL35 (65 aa).

It belongs to the bacterial ribosomal protein bL35 family.

This is Large ribosomal subunit protein bL35 from Aeromonas salmonicida (strain A449).